The sequence spans 149 residues: Probable flagellum biosynthesis repressor protein FlbT (149 aa).

The protein belongs to the FlbT family.

Functionally, has a post-transcriptional repressor function in flagellum biogenesis. Associates with the 5'-UTR of fljK mRNA and promotes its degradation. This chain is Probable flagellum biosynthesis repressor protein FlbT, found in Rhizobium etli (strain CIAT 652).